We begin with the raw amino-acid sequence, 755 residues long: Metabotropic glutamate receptor-like protein B (755 aa).

An N-terminal signal peptide occupies residues 1-23 (MKNLISIILLILIFFNYSKFVKS). Residues Asn-16, Asn-183, and Asn-273 are each glycosylated (N-linked (GlcNAc...) asparagine). Residues 24-385 (KNCKIAVLLS…VDYSSSMKLG (362 aa)) lie on the Extracellular side of the membrane. Residues 386 to 406 (ITITSSICIFLCIISIIIVLV) traverse the membrane as a helical segment. The Cytoplasmic portion of the chain corresponds to 407 to 417 (FRTARIIKSAS). A helical membrane pass occupies residues 418 to 438 (PAFLFLILMGCILIFIGCIIF). Topologically, residues 439–455 (SQSPNEGTCRARVWLLS) are extracellular. Residues 456-476 (IGYTIFLGSLLVKNWRIWLLF) traverse the membrane as a helical segment. The Cytoplasmic segment spans residues 477–492 (DNPKLKKRSITNWKLY). Residues 493–513 (PWVAGILAADVLILAFWQGLG) form a helical membrane-spanning segment. Topologically, residues 514 to 541 (NIRSESRIGIDSLTKYQYTNVCSSNDQG) are extracellular. Residues 542-562 (SIALYILLVFHGIKLLVACFI) form a helical membrane-spanning segment. The Cytoplasmic portion of the chain corresponds to 563-578 (SFKIKVVDIDEFNESK). The chain crosses the membrane as a helical span at residues 579–599 (PIASSVYIITFCLFIVIPLMV). Over 600–607 (SPQSVTSQ) the chain is Extracellular. Residues 608-628 (VTTICVCAIVTTLISIILLFG) traverse the membrane as a helical segment. Topologically, residues 629–755 (SKFYKMITQG…GEVEIDSNNL (127 aa)) are cytoplasmic. Disordered regions lie at residues 656–676 (QSLE…EENG) and 691–729 (FSSD…NIEE). A compositionally biased stretch (acidic residues) spans 694-710 (DTEDDENETQQIDEEKD).

The protein in the N-terminal section; belongs to the BMP lipoprotein family. It in the C-terminal section; belongs to the G-protein coupled receptor 3 family. GABA-B receptor subfamily.

The protein resides in the membrane. The protein is Metabotropic glutamate receptor-like protein B (grlB) of Dictyostelium discoideum (Social amoeba).